A 62-amino-acid chain; its full sequence is MALDIKLLDIIACPVCKGKLHYNKAVHELVCRFDKLAYPLEEGIPVLLENRARQLNSDEMPS.

Belongs to the UPF0434 family.

The sequence is that of UPF0434 protein ASA_1553 from Aeromonas salmonicida (strain A449).